The following is a 927-amino-acid chain: Echinoderm microtubule-associated protein-like 4 (927 aa).

The microtubule-binding stretch occupies residues 1 to 189 (MDGFAGSLDD…IPSDVENYDD (189 aa)). A coiled-coil region spans residues 14-63 (AASTSDVQDRLSALELRVQQQEDEITVLKAALADVLRRLAISEDQVATVR). Positions 85-132 (NGGAGTRKPSHASSVAKKDTLSSAAKSVKRSSTLEKSHNSWDASEESR) are disordered. A compositionally biased stretch (basic and acidic residues) spans 116-132 (STLEKSHNSWDASEESR). WD repeat units follow at residues 199–237 (LKLE…LFNY), 241–288 (TQRH…VWDS), 296–336 (VIGL…VWDW), 343–378 (AEIK…FWTW), 385–424 (RKQG…IWSK), 442–480 (QISK…MWDH), 485–521 (EREI…LRGT), 524–563 (DGFQ…LWNS), 567–604 (SLEW…VLDA), 610–646 (VSIH…LYNV), 653–692 (YSRY…YWDI), 702–760 (RSEC…LFQY), and 767–806 (APSH…QWRL). The span at 815–829 (NDNIAESSSAVNSPV) shows a compositional bias: polar residues. The segment at 815-927 (NDNIAESSSA…NQDDDDAPLS (113 aa)) is disordered. The span at 914-927 (AQDENQDDDDAPLS) shows a compositional bias: acidic residues.

The protein belongs to the WD repeat EMAP family. Homotrimer; self-association is mediated by the N-terminal coiled coil.

The protein resides in the cytoplasm. It localises to the cytoskeleton. The protein localises to the spindle. Its subcellular location is the microtubule organizing center. It is found in the midbody. Functionally, essential for the formation and stability of microtubules (MTs). Required for the organization of the mitotic spindle and for the proper attachment of kinetochores to MTs. Promotes the recruitment of NUDC to the mitotic spindle for mitotic progression. This Xenopus laevis (African clawed frog) protein is Echinoderm microtubule-associated protein-like 4 (eml4).